The following is a 172-amino-acid chain: R-phycocyanin-1 beta chain (172 aa).

An N4-methylasparagine modification is found at Asn72. Cys82 is a (2R,3E)-phycocyanobilin binding site. Cys153 contacts (2R,3E)-phycoerythrobilin.

Belongs to the phycobiliprotein family. Heterodimer of an alpha and a beta chain. Dimers further assemble into trimers and the trimers into hexamers. The basic functional unit of phycobiliproteins is a ring-shaped hexamer formed from two back-to-back trimers contacting via the alpha chain subunits. The trimers are composed of alpha/beta subunit heterodimers arranged around a three-fold axis of symmetry. The phycoerythrins also contain a gamma subunit which is located in the center of the hexamer. Contains two covalently linked bilin chromophores.

It is found in the plastid. It localises to the chloroplast thylakoid membrane. Light-harvesting photosynthetic bile pigment-protein from the phycobiliprotein complex (phycobilisome, PBS). Phycocyanin is the major phycobiliprotein in the PBS rod. The sequence is that of R-phycocyanin-1 beta chain (rpcB) from Porphyridium purpureum (Red alga).